Here is a 920-residue protein sequence, read N- to C-terminus: Urea transporter 2 (920 aa).

The segment at 25 to 57 (FTSPSWPSTSPDTHPALPLLEMPEEKDLRSSNE) is disordered. Over residues 26-39 (TSPSWPSTSPDTHP) the composition is skewed to low complexity. The segment covering 47–57 (PEEKDLRSSNE) has biased composition (basic and acidic residues). 9 helical membrane-spanning segments follow: residues 151–170 (WWTI…ALAL), 176–196 (AIAS…MAVF), 204–224 (WWLL…SSAL), 233–253 (LPVF…ATGH), 272–291 (ITWT…VGVG), 302–322 (GGVF…HAAI), 346–366 (WSYN…ALTW), 370–390 (LLAL…SNIM), and 392–412 (VVGV…FLLL). The tract at residues 446 to 467 (EKAPSGGGGEHPPTAGPKVEEG) is disordered. Residue serine 477 is modified to Phosphoserine. Transmembrane regions (helical) follow at residues 600 to 620 (GILI…SGCL), 638 to 658 (AIAA…MAVF), 666 to 686 (WWLL…SSAL), and 695 to 715 (LPVF…ATGH). N-linked (GlcNAc...) asparagine glycosylation occurs at asparagine 733. 4 helical membrane-spanning segments follow: residues 764-784 (GGIF…HAAI), 803-823 (IYFG…GGMF), 832-852 (LLAI…ANML), and 854-874 (VFGL…FLLL).

Belongs to the urea transporter family. Interacts with SNAPIN which enhances its urea transport activity. In terms of tissue distribution, epressed in the inner medulla of the kidney (at protein level). As to expression, expressed in the kidney.

It localises to the apical cell membrane. The protein localises to the cell membrane. It catalyses the reaction urea(in) = urea(out). Its activity is regulated as follows. Inhibited by phloretin. Its function is as follows. Mediates the transport of urea driven by a concentration gradient across the cell membrane of the renal inner medullary collecting duct which is critical to the urinary concentrating mechanism. Functionally, mediates the transport of urea driven by a concentration gradient across the cell membrane of the kidney inner medullary collecting duct which is critical to the urinary concentrating mechanism. The polypeptide is Urea transporter 2 (SLC14A2) (Homo sapiens (Human)).